The following is a 208-amino-acid chain: FMN-dependent NADH:quinone oxidoreductase (208 aa).

FMN is bound by residues 17–19 (SNS), 99–102 (MWNL), and 143–146 (SRGG).

This sequence belongs to the azoreductase type 1 family. In terms of assembly, homodimer. It depends on FMN as a cofactor.

It carries out the reaction 2 a quinone + NADH + H(+) = 2 a 1,4-benzosemiquinone + NAD(+). The catalysed reaction is N,N-dimethyl-1,4-phenylenediamine + anthranilate + 2 NAD(+) = 2-(4-dimethylaminophenyl)diazenylbenzoate + 2 NADH + 2 H(+). Functionally, quinone reductase that provides resistance to thiol-specific stress caused by electrophilic quinones. Also exhibits azoreductase activity. Catalyzes the reductive cleavage of the azo bond in aromatic azo compounds to the corresponding amines. The sequence is that of FMN-dependent NADH:quinone oxidoreductase from Staphylococcus aureus (strain Mu50 / ATCC 700699).